The sequence spans 208 residues: Probable nicotinate-nucleotide adenylyltransferase (208 aa).

This sequence belongs to the NadD family.

It carries out the reaction nicotinate beta-D-ribonucleotide + ATP + H(+) = deamido-NAD(+) + diphosphate. It functions in the pathway cofactor biosynthesis; NAD(+) biosynthesis; deamido-NAD(+) from nicotinate D-ribonucleotide: step 1/1. Functionally, catalyzes the reversible adenylation of nicotinate mononucleotide (NaMN) to nicotinic acid adenine dinucleotide (NaAD). This is Probable nicotinate-nucleotide adenylyltransferase from Trichormus variabilis (strain ATCC 29413 / PCC 7937) (Anabaena variabilis).